The sequence spans 345 residues: UPF0324 membrane protein CTC_01844 (345 aa).

The next 10 helical transmembrane spans lie at 7–24 (YSVG…SGFI), 28–50 (IPYR…NPIV), 70–87 (LAII…VLEV), 91–113 (SLIV…GKLF), 120–142 (SGLI…SPVI), 152–174 (AISA…GKYF), 181–203 (YGLW…YAFS), 209–231 (FSVI…FSYI), 261–283 (IFPW…IIPN), and 316–338 (SGFA…SFLV).

Belongs to the UPF0324 family.

The protein resides in the cell membrane. This Clostridium tetani (strain Massachusetts / E88) protein is UPF0324 membrane protein CTC_01844.